A 70-amino-acid chain; its full sequence is ATP synthase subunit epsilon, mitochondrial (70 aa).

This sequence belongs to the eukaryotic ATPase epsilon family. F-type ATPases have 2 components, CF(1) - the catalytic core - and CF(0) - the membrane proton channel. CF(1) has five subunits: alpha(3), beta(3), gamma(1), delta(1), epsilon(1). CF(0) has three main subunits: a, b and c.

The protein resides in the mitochondrion. The protein localises to the mitochondrion inner membrane. Mitochondrial membrane ATP synthase (F(1)F(0) ATP synthase or Complex V) produces ATP from ADP in the presence of a proton gradient across the membrane which is generated by electron transport complexes of the respiratory chain. F-type ATPases consist of two structural domains, F(1) - containing the extramembraneous catalytic core, and F(0) - containing the membrane proton channel, linked together by a central stalk and a peripheral stalk. During catalysis, ATP synthesis in the catalytic domain of F(1) is coupled via a rotary mechanism of the central stalk subunits to proton translocation. Part of the complex F(1) domain and of the central stalk which is part of the complex rotary element. Rotation of the central stalk against the surrounding alpha(3)beta(3) subunits leads to hydrolysis of ATP in three separate catalytic sites on the beta subunits. This chain is ATP synthase subunit epsilon, mitochondrial, found in Ipomoea batatas (Sweet potato).